The primary structure comprises 271 residues: Formamidopyrimidine-DNA glycosylase (271 aa).

The active-site Schiff-base intermediate with DNA is proline 2. Glutamate 3 serves as the catalytic Proton donor. The active-site Proton donor; for beta-elimination activity is lysine 57. DNA contacts are provided by histidine 90, arginine 109, and lysine 151. The FPG-type zinc finger occupies 236–270; it reads HVYGRGGETCTQCGNLLSEIKLGQRATVFCGLCQP. The Proton donor; for delta-elimination activity role is filled by arginine 260.

The protein belongs to the FPG family. Monomer. Requires Zn(2+) as cofactor.

The enzyme catalyses Hydrolysis of DNA containing ring-opened 7-methylguanine residues, releasing 2,6-diamino-4-hydroxy-5-(N-methyl)formamidopyrimidine.. It carries out the reaction 2'-deoxyribonucleotide-(2'-deoxyribose 5'-phosphate)-2'-deoxyribonucleotide-DNA = a 3'-end 2'-deoxyribonucleotide-(2,3-dehydro-2,3-deoxyribose 5'-phosphate)-DNA + a 5'-end 5'-phospho-2'-deoxyribonucleoside-DNA + H(+). Functionally, involved in base excision repair of DNA damaged by oxidation or by mutagenic agents. Acts as a DNA glycosylase that recognizes and removes damaged bases. Has a preference for oxidized purines, such as 7,8-dihydro-8-oxoguanine (8-oxoG). Has AP (apurinic/apyrimidinic) lyase activity and introduces nicks in the DNA strand. Cleaves the DNA backbone by beta-delta elimination to generate a single-strand break at the site of the removed base with both 3'- and 5'-phosphates. This is Formamidopyrimidine-DNA glycosylase from Shewanella loihica (strain ATCC BAA-1088 / PV-4).